The primary structure comprises 154 residues: Large ribosomal subunit protein uL13 (154 aa).

The protein belongs to the universal ribosomal protein uL13 family. As to quaternary structure, part of the 50S ribosomal subunit.

This protein is one of the early assembly proteins of the 50S ribosomal subunit, although it is not seen to bind rRNA by itself. It is important during the early stages of 50S assembly. In Rhizobium johnstonii (strain DSM 114642 / LMG 32736 / 3841) (Rhizobium leguminosarum bv. viciae), this protein is Large ribosomal subunit protein uL13.